The following is a 128-amino-acid chain: Sulfurtransferase TusD (128 aa).

Catalysis depends on cysteine 78, which acts as the Cysteine persulfide intermediate.

Belongs to the DsrE/TusD family. In terms of assembly, heterohexamer, formed by a dimer of trimers. The hexameric TusBCD complex contains 2 copies each of TusB, TusC and TusD. The TusBCD complex interacts with TusE.

It is found in the cytoplasm. Part of a sulfur-relay system required for 2-thiolation of 5-methylaminomethyl-2-thiouridine (mnm(5)s(2)U) at tRNA wobble positions. Accepts sulfur from TusA and transfers it in turn to TusE. The polypeptide is Sulfurtransferase TusD (Escherichia coli O7:K1 (strain IAI39 / ExPEC)).